The following is a 323-amino-acid chain: Acetyl-coenzyme A carboxylase carboxyl transferase subunit alpha (323 aa).

The CoA carboxyltransferase C-terminal domain occupies 39 to 293 (RLSKKSQQLT…RRALADSLRQ (255 aa)).

This sequence belongs to the AccA family. As to quaternary structure, acetyl-CoA carboxylase is a heterohexamer composed of biotin carboxyl carrier protein (AccB), biotin carboxylase (AccC) and two subunits each of ACCase subunit alpha (AccA) and ACCase subunit beta (AccD).

Its subcellular location is the cytoplasm. It carries out the reaction N(6)-carboxybiotinyl-L-lysyl-[protein] + acetyl-CoA = N(6)-biotinyl-L-lysyl-[protein] + malonyl-CoA. The protein operates within lipid metabolism; malonyl-CoA biosynthesis; malonyl-CoA from acetyl-CoA: step 1/1. Component of the acetyl coenzyme A carboxylase (ACC) complex. First, biotin carboxylase catalyzes the carboxylation of biotin on its carrier protein (BCCP) and then the CO(2) group is transferred by the carboxyltransferase to acetyl-CoA to form malonyl-CoA. This Burkholderia orbicola (strain AU 1054) protein is Acetyl-coenzyme A carboxylase carboxyl transferase subunit alpha.